Consider the following 383-residue polypeptide: Geranylgeranyl pyrophosphate synthase esdpD (383 aa).

Isopentenyl diphosphate-binding residues include Lys-88, Arg-91, and His-120. Positions 150 and 154 each coordinate Mg(2+). Arg-159 is a binding site for dimethylallyl diphosphate. Residue Arg-160 coordinates isopentenyl diphosphate. Lys-237, Thr-238, and Gln-271 together coordinate dimethylallyl diphosphate. Mg(2+) is bound at residue Asp-274. Residues Asn-278, Lys-288, and Lys-298 each contribute to the dimethylallyl diphosphate site.

The protein belongs to the FPP/GGPP synthase family. The cofactor is Mg(2+).

The catalysed reaction is isopentenyl diphosphate + dimethylallyl diphosphate = (2E)-geranyl diphosphate + diphosphate. It carries out the reaction isopentenyl diphosphate + (2E)-geranyl diphosphate = (2E,6E)-farnesyl diphosphate + diphosphate. The enzyme catalyses isopentenyl diphosphate + (2E,6E)-farnesyl diphosphate = (2E,6E,10E)-geranylgeranyl diphosphate + diphosphate. Its pathway is secondary metabolite biosynthesis; terpenoid biosynthesis. Its function is as follows. Geranylgeranyl pyrophosphate synthase; part of the cluster that mediates the biosynthesis of shearones, diterpenoid pyrones (DPs) which are structurally diverse meroterpenoids consisting of a diterpene linked by a pyrone, and which may exhibit a range of bioactivities. Within the pathway, esdpD takes part to the biosynthesis of the molecular scaffold by providing geranylgeranyl pyrophosphate (GGPP) to the prenyltransferase esdpC for C-3 geranylgeranylation of the alpha-pyrone. The molecular scaffold is commonly biosynthesized by a series of enzymes including the non-reducing polyketide synthase (NR-PKS) esdpA that generates an alpha-pyrone; the prenyltransferase esdpC that attaches a geranylgeranyl pyrophosphate (GGPP) produced by the GGPP synthase (GGPPS) esdpD onto the pyrone unit; the FAD-dependent monooxygenase esdpE that converts an olefin on the diterpene unit into an epoxide; and the terpene cyclase esdpB that catalyzes the cyclization reactions to give the molecular backbone shearone A. In the modification steps, esdpF oxidizes the hydroxy group to a ketone at C-3 and esdpG then attaches hydroxy groups at both C-11 and C-12. After that, esdpI hydroxylates at C-20 and esdpH hydroxylates at C-6'. The ether bridge is generated by nucleophilic attack of the hydroxy group at C-20 to the carbonyl carbon at C-3. EsdpH can also functions prior to esdpI. The different combinations of these modification enzymes lead to the production of diverse shearone derivatives, shearone I being the end product of the pathway. The alpha-ketoglutarate-dependent dioxygenase esdpJ seems not to be involved in this pathway. The chain is Geranylgeranyl pyrophosphate synthase esdpD from Penicillium shearii (Eupenicillium shearii).